Consider the following 276-residue polypeptide: MPELPEVETVRRSLERTVSGKTISSVKVFHPKMIRGMEVAPFVDALKQERIERVERRGKFLLFTFDRFYLVSHLRMEGKYFPYPQAIEKDKHTHVIFRFTDGSELHYNDVRKFGTMELREKETAMSVPPLAQLEREPFDPTFTAEVLAENLIRKKRSPIKTSLLDQSIFLGLGNIYVDETLFAARVHPLTKAGALTLDDISRIHAAGVDVLAKAVESGGSTIRSYVSPTGKGEFQLQLAVYGQTGAPCPRCGTAIEKIKVGGRGTHFCPTCQQVAL.

P2 acts as the Schiff-base intermediate with DNA in catalysis. Residue E3 is the Proton donor of the active site. Catalysis depends on K59, which acts as the Proton donor; for beta-elimination activity. Residues H92, R111, and K155 each contribute to the DNA site. The FPG-type zinc-finger motif lies at A239–Q273. The Proton donor; for delta-elimination activity role is filled by R263.

The protein belongs to the FPG family. Monomer. It depends on Zn(2+) as a cofactor.

The catalysed reaction is Hydrolysis of DNA containing ring-opened 7-methylguanine residues, releasing 2,6-diamino-4-hydroxy-5-(N-methyl)formamidopyrimidine.. The enzyme catalyses 2'-deoxyribonucleotide-(2'-deoxyribose 5'-phosphate)-2'-deoxyribonucleotide-DNA = a 3'-end 2'-deoxyribonucleotide-(2,3-dehydro-2,3-deoxyribose 5'-phosphate)-DNA + a 5'-end 5'-phospho-2'-deoxyribonucleoside-DNA + H(+). Involved in base excision repair of DNA damaged by oxidation or by mutagenic agents. Acts as a DNA glycosylase that recognizes and removes damaged bases. Has a preference for oxidized purines, such as 7,8-dihydro-8-oxoguanine (8-oxoG). Has AP (apurinic/apyrimidinic) lyase activity and introduces nicks in the DNA strand. Cleaves the DNA backbone by beta-delta elimination to generate a single-strand break at the site of the removed base with both 3'- and 5'-phosphates. The polypeptide is Formamidopyrimidine-DNA glycosylase (Exiguobacterium sibiricum (strain DSM 17290 / CCUG 55495 / CIP 109462 / JCM 13490 / 255-15)).